The following is a 583-amino-acid chain: MGEKLDKDSILYKKRHSIAHVMAEAVLELFPNTKIAIGPPIKDGFYYDFDFEKHISEDDLLLIEHKMREILKTGSPFIREVITREQALVLFKDEPYKIDLIQNFDVTDEITIYKSHKFTDLCRGPHVDNMNKLDPKAFKLTSIAGAYWRGDERNKMLSRIYGTLWNNEKDLKAYLKLQEEIKKRDHRKLGRELNLFSVHDEIGPGLIFFHPHGARIRALIENFWREEHFKNGYDILFTPHIGKSWLWETSGHLDFYKESMFEKIEMDRSDYYVKPMNCPFHIAIYNTDKHSYRDLPFRWAELGTVYRYEKIGAIHGTMRVRGFTQDDAHIICTYEQVNFEVREVLRFAIDMWNKFGFTNLKAYLSTKPEKAVGDDDDWQMAVKVLEKALIDFNIDFDIDEGGGAFYGPKIDLKIIDSLGRAWQMSTIQFDFNLPVRFKMTYTAEDGKEKRPFMIHRALLGSIERFFGILVEHYGGAFPVWLAPLQVVIIPVNSIVEEYALEVLSRFQNEGIRIKFDNYCNMRMNAKIRQYQSKKVPYMFIIGEREVVEGKISIRTRTNEQINGLELKEALEFVKLKISNKEIL.

Residues 185–478 (DHRKLGRELN…LVEHYGGAFP (294 aa)) form a catalytic region. Positions 278, 329, and 455 each coordinate Zn(2+).

Belongs to the class-II aminoacyl-tRNA synthetase family. As to quaternary structure, homodimer. Requires Zn(2+) as cofactor.

Its subcellular location is the cytoplasm. It carries out the reaction tRNA(Thr) + L-threonine + ATP = L-threonyl-tRNA(Thr) + AMP + diphosphate + H(+). Catalyzes the attachment of threonine to tRNA(Thr) in a two-step reaction: L-threonine is first activated by ATP to form Thr-AMP and then transferred to the acceptor end of tRNA(Thr). Also edits incorrectly charged L-seryl-tRNA(Thr). The chain is Threonine--tRNA ligase from Borrelia duttonii (strain Ly).